The chain runs to 365 residues: Casein kinase I homolog hhp1 (365 aa).

The Protein kinase domain maps to 11–279 (YRIGRKIGSG…YLRKLFRDLF (269 aa)). ATP is bound by residues 17 to 25 (IGSGSFGDI) and lysine 40. The active-site Proton acceptor is the aspartate 130. The span at 301–311 (DQQHQQQLQQQ) shows a compositional bias: low complexity. Residues 301-365 (DQQHQQQLQQ…TGAQYINRPN (65 aa)) form a disordered region. The segment covering 343-365 (INTTVPVINDPSATGAQYINRPN) has biased composition (polar residues).

Belongs to the protein kinase superfamily. CK1 Ser/Thr protein kinase family. Casein kinase I subfamily.

Its subcellular location is the nucleus. The enzyme catalyses L-seryl-[protein] + ATP = O-phospho-L-seryl-[protein] + ADP + H(+). The catalysed reaction is L-threonyl-[protein] + ATP = O-phospho-L-threonyl-[protein] + ADP + H(+). Involved in DNA repair. Has a probable role in repairing alkylated DNA and may regulate the activity of protein(s) involved in double strand break repair caused by gamma rays. The polypeptide is Casein kinase I homolog hhp1 (hhp1) (Schizosaccharomyces pombe (strain 972 / ATCC 24843) (Fission yeast)).